The primary structure comprises 318 residues: NADH-ubiquinone oxidoreductase chain 1 (318 aa).

The next 8 membrane-spanning stretches (helical) occupy residues 3 to 23 (FMNL…LTLL), 69 to 89 (VLFI…WIPL), 102 to 122 (ILFM…SGWA), 146 to 166 (LAII…STLI), 171 to 191 (HIWL…STLA), 222 to 242 (LFFL…IILF), 253 to 273 (ELYT…FLWV), and 294 to 314 (LPLT…LAGI).

This sequence belongs to the complex I subunit 1 family. In terms of assembly, core subunit of respiratory chain NADH dehydrogenase (Complex I) which is composed of 45 different subunits.

The protein resides in the mitochondrion inner membrane. It carries out the reaction a ubiquinone + NADH + 5 H(+)(in) = a ubiquinol + NAD(+) + 4 H(+)(out). Functionally, core subunit of the mitochondrial membrane respiratory chain NADH dehydrogenase (Complex I) which catalyzes electron transfer from NADH through the respiratory chain, using ubiquinone as an electron acceptor. Essential for the catalytic activity and assembly of complex I. The sequence is that of NADH-ubiquinone oxidoreductase chain 1 (MT-ND1) from Cnephaeus nilssonii (Northern bat).